Reading from the N-terminus, the 218-residue chain is Small ribosomal subunit protein uS3 (218 aa).

The 70-residue stretch at 2 to 71 (SAPQRRLPVY…IGRKGAIVKE (70 aa)) folds into the KH type-2 domain.

The protein belongs to the universal ribosomal protein uS3 family. In terms of assembly, part of the 30S ribosomal subunit.

Its function is as follows. Binds the lower part of the 30S subunit head. In Pyrobaculum aerophilum (strain ATCC 51768 / DSM 7523 / JCM 9630 / CIP 104966 / NBRC 100827 / IM2), this protein is Small ribosomal subunit protein uS3.